Here is a 246-residue protein sequence, read N- to C-terminus: 1-(5-phosphoribosyl)-5-[(5-phosphoribosylamino)methylideneamino] imidazole-4-carboxamide isomerase (246 aa).

Aspartate 8 (proton acceptor) is an active-site residue. The Proton donor role is filled by aspartate 131.

Belongs to the HisA/HisF family.

The protein localises to the cytoplasm. The enzyme catalyses 1-(5-phospho-beta-D-ribosyl)-5-[(5-phospho-beta-D-ribosylamino)methylideneamino]imidazole-4-carboxamide = 5-[(5-phospho-1-deoxy-D-ribulos-1-ylimino)methylamino]-1-(5-phospho-beta-D-ribosyl)imidazole-4-carboxamide. Its pathway is amino-acid biosynthesis; L-histidine biosynthesis; L-histidine from 5-phospho-alpha-D-ribose 1-diphosphate: step 4/9. The chain is 1-(5-phosphoribosyl)-5-[(5-phosphoribosylamino)methylideneamino] imidazole-4-carboxamide isomerase from Bordetella avium (strain 197N).